The chain runs to 156 residues: Endoribonuclease YbeY (156 aa).

Zn(2+) contacts are provided by His-122, His-126, and His-132.

The protein belongs to the endoribonuclease YbeY family. The cofactor is Zn(2+).

It localises to the cytoplasm. In terms of biological role, single strand-specific metallo-endoribonuclease involved in late-stage 70S ribosome quality control and in maturation of the 3' terminus of the 16S rRNA. The chain is Endoribonuclease YbeY from Symbiobacterium thermophilum (strain DSM 24528 / JCM 14929 / IAM 14863 / T).